A 249-amino-acid polypeptide reads, in one-letter code: Small ribosomal subunit protein uS2 (249 aa).

The protein belongs to the universal ribosomal protein uS2 family.

This is Small ribosomal subunit protein uS2 from Listeria monocytogenes serovar 1/2a (strain ATCC BAA-679 / EGD-e).